The sequence spans 59 residues: Bdellastasin (59 aa).

Intrachain disulfides connect Cys-10–Cys-21, Cys-15–Cys-26, Cys-28–Cys-48, Cys-33–Cys-52, and Cys-37–Cys-54. The 27-residue stretch at 28-54 folds into the Antistasin-like domain; it reads CSDLHCKVKCEHGFKKDDNGCEYACIC.

Its subcellular location is the secreted. Strong inhibitor of mammalian trypsin, plasmin and acrosin. This chain is Bdellastasin, found in Hirudo medicinalis (Medicinal leech).